A 999-amino-acid chain; its full sequence is Hypoxia up-regulated protein 1 (999 aa).

The N-terminal stretch at 1–32 (MAATVRRQRPRRLLCWTLVAVLLADLLALSDT) is a signal peptide. N155, N222, and N515 each carry an N-linked (GlcNAc...) asparagine glycan. The interval 564–694 (VEDSPEEEST…KKQKPARKQK (131 aa)) is disordered. S567 is subject to Phosphoserine. Positions 574-583 (LTKLGNTISS) are enriched in polar residues. N-linked (GlcNAc...) asparagine glycosylation occurs at N596. Composition is skewed to basic and acidic residues over residues 611 to 626 (GSKD…KEET) and 641 to 670 (PKGD…EEKG). N-linked (GlcNAc...) asparagine glycans are attached at residues N830, N862, and N869. The residue at position 883 (K883) is an N6-acetyllysine. The tract at residues 909–999 (AKFTKPRPRP…QKRSSKNDEL (91 aa)) is disordered. N-linked (GlcNAc...) asparagine glycosylation is found at N922 and N931. Over residues 949 to 962 (EEAKPILEPDKEET) the composition is skewed to basic and acidic residues. The Prevents secretion from ER signature appears at 996 to 999 (NDEL).

This sequence belongs to the heat shock protein 70 family. In terms of assembly, part of a large chaperone multiprotein complex comprising DNAJB11, HSP90B1, HSPA5, HYOU, PDIA2, PDIA4, PDIA6, PPIB, SDF2L1, UGGT1 and very small amounts of ERP29, but not, or at very low levels, CALR nor CANX.

Its subcellular location is the endoplasmic reticulum lumen. In terms of biological role, has a pivotal role in cytoprotective cellular mechanisms triggered by oxygen deprivation. Promotes HSPA5/BiP-mediated ATP nucleotide exchange and thereby activates the unfolded protein response (UPR) pathway in the presence of endoplasmic reticulum stress. May play a role as a molecular chaperone and participate in protein folding. This Cricetulus griseus (Chinese hamster) protein is Hypoxia up-regulated protein 1 (HYOU1).